A 281-amino-acid polypeptide reads, in one-letter code: Diaminopimelate epimerase (281 aa).

Substrate is bound by residues Asn-14 and Asn-65. The active-site Proton donor is the Cys-74. Substrate-binding positions include 75-76 (GN), Asn-165, Asn-198, and 216-217 (ER). Cys-225 functions as the Proton acceptor in the catalytic mechanism. 226–227 (GT) contacts substrate.

This sequence belongs to the diaminopimelate epimerase family. Homodimer.

It localises to the cytoplasm. The enzyme catalyses (2S,6S)-2,6-diaminopimelate = meso-2,6-diaminopimelate. It functions in the pathway amino-acid biosynthesis; L-lysine biosynthesis via DAP pathway; DL-2,6-diaminopimelate from LL-2,6-diaminopimelate: step 1/1. Functionally, catalyzes the stereoinversion of LL-2,6-diaminopimelate (L,L-DAP) to meso-diaminopimelate (meso-DAP), a precursor of L-lysine and an essential component of the bacterial peptidoglycan. The sequence is that of Diaminopimelate epimerase from Leptospira interrogans serogroup Icterohaemorrhagiae serovar copenhageni (strain Fiocruz L1-130).